A 329-amino-acid polypeptide reads, in one-letter code: uncharacterized protein (329 aa).

Residues 38-184 (IVKLILKSQE…MACLMRAKNF (147 aa)) enclose the SIS domain. ATP is bound at residue 56–61 (GVGKSA). CBS domains lie at 211–267 (QTTN…GVSL) and 270–329 (EVRH…GLKA).

Belongs to the SIS family. GutQ/KpsF subfamily.

This is an uncharacterized protein from Helicobacter pylori (strain ATCC 700392 / 26695) (Campylobacter pylori).